We begin with the raw amino-acid sequence, 312 residues long: DNA-directed RNA polymerase subunit alpha (312 aa).

The tract at residues 1–226 (MIEFKKPNIT…EHFKAFESAD (226 aa)) is alpha N-terminal domain (alpha-NTD). The interval 243–312 (KEKKLEMTIE…DLGLSLRQED (70 aa)) is alpha C-terminal domain (alpha-CTD).

It belongs to the RNA polymerase alpha chain family. In terms of assembly, homodimer. The RNAP catalytic core consists of 2 alpha, 1 beta, 1 beta' and 1 omega subunit. When a sigma factor is associated with the core the holoenzyme is formed, which can initiate transcription.

The enzyme catalyses RNA(n) + a ribonucleoside 5'-triphosphate = RNA(n+1) + diphosphate. In terms of biological role, DNA-dependent RNA polymerase catalyzes the transcription of DNA into RNA using the four ribonucleoside triphosphates as substrates. The protein is DNA-directed RNA polymerase subunit alpha of Lactobacillus delbrueckii subsp. bulgaricus (strain ATCC BAA-365 / Lb-18).